The chain runs to 308 residues: Aspartate carbamoyltransferase catalytic subunit (308 aa).

Carbamoyl phosphate-binding residues include R55 and T56. An L-aspartate-binding site is contributed by K83. 3 residues coordinate carbamoyl phosphate: R105, H133, and Q136. Residues R166 and R220 each contribute to the L-aspartate site. Positions 261 and 262 each coordinate carbamoyl phosphate.

This sequence belongs to the aspartate/ornithine carbamoyltransferase superfamily. ATCase family. In terms of assembly, heterododecamer (2C3:3R2) of six catalytic PyrB chains organized as two trimers (C3), and six regulatory PyrI chains organized as three dimers (R2).

The catalysed reaction is carbamoyl phosphate + L-aspartate = N-carbamoyl-L-aspartate + phosphate + H(+). Its pathway is pyrimidine metabolism; UMP biosynthesis via de novo pathway; (S)-dihydroorotate from bicarbonate: step 2/3. Catalyzes the condensation of carbamoyl phosphate and aspartate to form carbamoyl aspartate and inorganic phosphate, the committed step in the de novo pyrimidine nucleotide biosynthesis pathway. This is Aspartate carbamoyltransferase catalytic subunit from Chlorobium limicola (strain DSM 245 / NBRC 103803 / 6330).